The following is a 199-amino-acid chain: Large ribosomal subunit protein mL51 (199 aa).

The transit peptide at 1-15 directs the protein to the mitochondrion; it reads MNSNSLSRFTSIVRT.

Belongs to the mitochondrion-specific ribosomal protein mL51 family. Component of the mitochondrial ribosome large subunit (39S) which comprises a 16S rRNA and about 50 distinct proteins.

It localises to the mitochondrion. This Caenorhabditis elegans protein is Large ribosomal subunit protein mL51 (mrpl-51).